A 311-amino-acid chain; its full sequence is Homoserine kinase (311 aa).

Position 96 to 106 (96 to 106) interacts with ATP; it reads PLARGLGSSAA.

The protein belongs to the GHMP kinase family. Homoserine kinase subfamily.

Its subcellular location is the cytoplasm. It catalyses the reaction L-homoserine + ATP = O-phospho-L-homoserine + ADP + H(+). The protein operates within amino-acid biosynthesis; L-threonine biosynthesis; L-threonine from L-aspartate: step 4/5. Catalyzes the ATP-dependent phosphorylation of L-homoserine to L-homoserine phosphate. The sequence is that of Homoserine kinase from Natranaerobius thermophilus (strain ATCC BAA-1301 / DSM 18059 / JW/NM-WN-LF).